Here is a 617-residue protein sequence, read N- to C-terminus: Chaperone protein DnaK (617 aa).

At Thr-175 the chain carries Phosphothreonine; by autocatalysis. Residues 578-592 (AGAEAQQGAQGTQGA) are compositionally biased toward low complexity. A disordered region spans residues 578–617 (AGAEAQQGAQGTQGADMGGNAQGKDDDNVVDADFKVEDDK). Positions 600–617 (GKDDDNVVDADFKVEDDK) are enriched in basic and acidic residues.

This sequence belongs to the heat shock protein 70 family.

Functionally, acts as a chaperone. The polypeptide is Chaperone protein DnaK (Clostridium novyi (strain NT)).